Consider the following 134-residue polypeptide: Small ribosomal subunit protein uS8c (134 aa).

The protein belongs to the universal ribosomal protein uS8 family. As to quaternary structure, part of the 30S ribosomal subunit.

It localises to the plastid. The protein localises to the chloroplast. Functionally, one of the primary rRNA binding proteins, it binds directly to 16S rRNA central domain where it helps coordinate assembly of the platform of the 30S subunit. This Populus alba (White poplar) protein is Small ribosomal subunit protein uS8c (rps8).